The following is a 382-amino-acid chain: MAKRDYYEILGVSKNATKDEIKKAYRKLSKQYHPDVNKAPDAAEKFKEIKEAYEVLSDDEKRARYDRFGHADPNETFGGGGFQGGGFDFGGFSGFGGFEDIFETFFGAGPRRRASGPRKGADVEYMMTLTFEEAAFGKETEIEIPREETCDTCQGSGAKPGTSPTSCPHCHGSGQVTSEQATPFGRIVNRRTCPVCGGTGRYIPEKCPTCGGTGRVKRRKKIHVKIPAGVDDGQQLRVAGQGEPGVNGGPPGDLYIIFRVEPHEFFKRDGDDIYCEVPLSFAQAALGDEIEVPTLHGHVKLKIPAGTQTGTRFRLKGKGVPNVRGYGQGDQHVIVRVVTPTKLTEKQKQLLREFERLGGDTMHDGPHGRFFEKVKKAFKGEA.

Residues 5–69 enclose the J domain; sequence DYYEILGVSK…EKRARYDRFG (65 aa). The CR-type zinc-finger motif lies at 137-219; sequence GKETEIEIPR…CGGTGRVKRR (83 aa). Residues cysteine 150, cysteine 153, cysteine 167, cysteine 170, cysteine 193, cysteine 196, cysteine 207, and cysteine 210 each coordinate Zn(2+). CXXCXGXG motif repeat units lie at residues 150–157, 167–174, 193–200, and 207–214; these read CDTCQGSG, CPHCHGSG, CPVCGGTG, and CPTCGGTG. A disordered region spans residues 154-175; that stretch reads QGSGAKPGTSPTSCPHCHGSGQ.

It belongs to the DnaJ family. As to quaternary structure, homodimer. Requires Zn(2+) as cofactor.

Its subcellular location is the cytoplasm. In terms of biological role, participates actively in the response to hyperosmotic and heat shock by preventing the aggregation of stress-denatured proteins and by disaggregating proteins, also in an autonomous, DnaK-independent fashion. Unfolded proteins bind initially to DnaJ; upon interaction with the DnaJ-bound protein, DnaK hydrolyzes its bound ATP, resulting in the formation of a stable complex. GrpE releases ADP from DnaK; ATP binding to DnaK triggers the release of the substrate protein, thus completing the reaction cycle. Several rounds of ATP-dependent interactions between DnaJ, DnaK and GrpE are required for fully efficient folding. Also involved, together with DnaK and GrpE, in the DNA replication of plasmids through activation of initiation proteins. This chain is Chaperone protein DnaJ, found in Geobacillus kaustophilus (strain HTA426).